The following is a 1312-amino-acid chain: uncharacterized protein (1312 aa).

A signal peptide spans 1-20 (MRNNLIYTMFLSCLHFETFC). The segment covering 299 to 344 (TTTSSSTMLSSTTLLTTETETRESSSTGSTQTTTPSTEPSTTITTP) has biased composition (low complexity). 8 disordered regions span residues 299–503 (TTTS…TTTY), 565–609 (EITS…PTGG), 645–692 (KETR…PTGG), 749–775 (SSSS…PTGG), 812–864 (KTRT…GGTT), 899–942 (KTRT…PTGG), 1048–1079 (KTRT…TGGT), and 1114–1165 (NTTR…TLET). Residues 345-357 (MEQSSTVSSVQKT) show a composition bias toward polar residues. Low complexity predominate over residues 365–503 (SSSTTVPTSA…STPATPTTTY (139 aa)). The segment covering 565-574 (EITSDAEGCK) has biased composition (basic and acidic residues). The segment covering 576–609 (TSSTPTPSSTSVHSTTATPSTTPGTTTYNWPTGG) has biased composition (low complexity). Over residues 645 to 659 (KETRTETTTDADGCK) the composition is skewed to basic and acidic residues. The segment covering 660–692 (KTSSTSSSTPSLKHSTTPTPTPGTTTYNWPTGG) has biased composition (low complexity). Residues 813 to 825 (TRTETTTDAEGCK) are compositionally biased toward basic and acidic residues. Low complexity predominate over residues 826–864 (KTSSTSKISTTPTSPTSSKPTPTSTSMTTTYNWPTGGTT). Residues 899-908 (KTRTETTTDA) are compositionally biased toward polar residues. Residues 914–942 (TSSTSLKPTSPSSSTASPPTTTYNWPTGG) show a composition bias toward low complexity. Residues 1048-1057 (KTRTETTSDA) are compositionally biased toward polar residues. The span at 1063 to 1076 (TSTTQTPTTFNWPT) shows a compositional bias: low complexity. Polar residues predominate over residues 1114 to 1123 (NTTRTETTSD). Residues 1130-1154 (TSSGTTSTMSPGTTGGTTVSRTTNS) show a composition bias toward low complexity. A compositionally biased stretch (polar residues) spans 1155 to 1164 (NNPIDSSTLE). Positions 1239–1306 (ATCSSLNLNL…WSGTPEKCVA (68 aa)) constitute a Sushi domain. Cystine bridges form between cysteine 1241-cysteine 1291 and cysteine 1273-cysteine 1304.

It localises to the secreted. This is an uncharacterized protein from Caenorhabditis elegans.